A 44-amino-acid polypeptide reads, in one-letter code: Large ribosomal subunit protein bL34 (44 aa).

It belongs to the bacterial ribosomal protein bL34 family.

This is Large ribosomal subunit protein bL34 from Wolbachia pipientis wMel.